The following is a 623-amino-acid chain: Chaperone protein HtpG (623 aa).

An a; substrate-binding region spans residues 1–330 (MIMTQEKKKF…SEDLPLNISR (330 aa)). Positions 331-546 (ESLQHNSVLE…DAAMDIRMER (216 aa)) are b. The disordered stretch occupies residues 477–497 (SDIDVEQTTSQSEEKNTDSKK). Residues 488–497 (SEEKNTDSKK) are compositionally biased toward basic and acidic residues. Residues 547-623 (FLIEQKQIAN…LNDIVQKAIL (77 aa)) are c.

The protein belongs to the heat shock protein 90 family. In terms of assembly, homodimer.

The protein localises to the cytoplasm. In terms of biological role, molecular chaperone. Has ATPase activity. This chain is Chaperone protein HtpG, found in Rickettsia massiliae (strain Mtu5).